The sequence spans 272 residues: Putative phosphoenolpyruvate synthase regulatory protein (272 aa).

Position 152 to 159 (152 to 159 (GVSRCGKT)) interacts with ADP.

It belongs to the pyruvate, phosphate/water dikinase regulatory protein family. PSRP subfamily.

The enzyme catalyses [pyruvate, water dikinase] + ADP = [pyruvate, water dikinase]-phosphate + AMP + H(+). It carries out the reaction [pyruvate, water dikinase]-phosphate + phosphate + H(+) = [pyruvate, water dikinase] + diphosphate. Bifunctional serine/threonine kinase and phosphorylase involved in the regulation of the phosphoenolpyruvate synthase (PEPS) by catalyzing its phosphorylation/dephosphorylation. The sequence is that of Putative phosphoenolpyruvate synthase regulatory protein from Pseudomonas putida (strain GB-1).